The primary structure comprises 281 residues: Diaminopimelate epimerase (281 aa).

Substrate-binding residues include Asn13, Gln46, and Asn66. The active-site Proton donor is Cys75. Substrate-binding positions include 76–77, Asn160, Asn193, and 211–212; these read GN and ER. Cys220 acts as the Proton acceptor in catalysis. 221-222 serves as a coordination point for substrate; it reads GT.

This sequence belongs to the diaminopimelate epimerase family. In terms of assembly, homodimer.

It localises to the cytoplasm. The catalysed reaction is (2S,6S)-2,6-diaminopimelate = meso-2,6-diaminopimelate. It functions in the pathway amino-acid biosynthesis; L-lysine biosynthesis via DAP pathway; DL-2,6-diaminopimelate from LL-2,6-diaminopimelate: step 1/1. In terms of biological role, catalyzes the stereoinversion of LL-2,6-diaminopimelate (L,L-DAP) to meso-diaminopimelate (meso-DAP), a precursor of L-lysine and an essential component of the bacterial peptidoglycan. This chain is Diaminopimelate epimerase, found in Acinetobacter baylyi (strain ATCC 33305 / BD413 / ADP1).